The following is a 382-amino-acid chain: Serine/threonine-protein phosphatase 2A activator 2 (382 aa).

Positions 363–382 (SHKGVPTLGNRPGIKPIPFD) are disordered.

It belongs to the PTPA-type PPIase family.

It localises to the cytoplasm. It catalyses the reaction [protein]-peptidylproline (omega=180) = [protein]-peptidylproline (omega=0). In terms of biological role, PPIases accelerate the folding of proteins. It catalyzes the cis-trans isomerization of proline imidic peptide bonds in oligopeptides. Acts as a regulatory subunit for PP2A-like phosphatases modulating their activity or substrate specificity, probably by inducing a conformational change in the catalytic subunit, a direct target of the PPIase. Can reactivate inactive phosphatase PP2A-phosphatase methylesterase complexes (PP2Ai) in presence of ATP and Mg(2+) by dissociating the inactive form from the complex. In Cryptococcus neoformans var. neoformans serotype D (strain B-3501A) (Filobasidiella neoformans), this protein is Serine/threonine-protein phosphatase 2A activator 2 (RRD2).